We begin with the raw amino-acid sequence, 209 residues long: ATP-dependent Clp protease proteolytic subunit (209 aa).

Residue S113 is the Nucleophile of the active site. H138 is a catalytic residue.

The protein belongs to the peptidase S14 family. As to quaternary structure, fourteen ClpP subunits assemble into 2 heptameric rings which stack back to back to give a disk-like structure with a central cavity, resembling the structure of eukaryotic proteasomes.

It is found in the cytoplasm. It catalyses the reaction Hydrolysis of proteins to small peptides in the presence of ATP and magnesium. alpha-casein is the usual test substrate. In the absence of ATP, only oligopeptides shorter than five residues are hydrolyzed (such as succinyl-Leu-Tyr-|-NHMec, and Leu-Tyr-Leu-|-Tyr-Trp, in which cleavage of the -Tyr-|-Leu- and -Tyr-|-Trp bonds also occurs).. Its function is as follows. Cleaves peptides in various proteins in a process that requires ATP hydrolysis. Has a chymotrypsin-like activity. Plays a major role in the degradation of misfolded proteins. This Blochmanniella floridana protein is ATP-dependent Clp protease proteolytic subunit.